The primary structure comprises 395 residues: uncharacterized protein (395 aa).

Residues 1–18 (MKHVIMLYFIAAATLFSS) form the signal peptide. The N-palmitoyl cysteine moiety is linked to residue C19. C19 carries the S-diacylglycerol cysteine lipid modification.

The protein localises to the cell outer membrane. Functionally, may be involved in ulvan degradation. Ulvan is the main polysaccharide component of the Ulvales (green seaweed) cell wall. It is composed of disaccharide building blocks comprising 3-sulfated rhamnose (Rha3S) linked to D-glucuronic acid (GlcA), L-iduronic acid (IduA), or D-xylose (Xyl). This is an uncharacterized protein from Formosa agariphila (strain DSM 15362 / KCTC 12365 / LMG 23005 / KMM 3901 / M-2Alg 35-1).